Reading from the N-terminus, the 159-residue chain is F1845 fimbrial protein (159 aa).

Positions 1-21 are cleaved as a signal peptide; it reads MKKLAIMAAASMIFTVGSAQA.

Belongs to the Dr-adhesin family.

Its subcellular location is the fimbrium. Its function is as follows. Hemagglutinins of uropathogenic E.coli mediate adherence to the upper urinary tract. These adhesins bind to the Dr blood group antigen and also agglutinate human erythrocytes in the presence of D-mannose (mannose-resistant hemagglutination (MRHA)). C1845 is a strain responsible for diarrheal disease. In Escherichia coli, this protein is F1845 fimbrial protein (daaE).